The following is a 361-amino-acid chain: Caffeic acid 3-O-methyltransferase 1 (361 aa).

128–134 (MNQDKVL) is a binding site for substrate. The substrate binding stretch occupies residues 160–178 (AFEYHGTDPRFNKVFNQGM). S-adenosyl-L-methionine-binding residues include glycine 206, aspartate 229, aspartate 249, methionine 250, and lysine 263. The active-site Proton acceptor is the histidine 267.

It belongs to the class I-like SAM-binding methyltransferase superfamily. Cation-independent O-methyltransferase family. COMT subfamily. Homodimer.

It carries out the reaction (E)-caffeate + S-adenosyl-L-methionine = (E)-ferulate + S-adenosyl-L-homocysteine + H(+). The protein operates within aromatic compound metabolism; phenylpropanoid biosynthesis. In terms of biological role, catalyzes the conversion of caffeic acid to ferulic acid and of 5-hydroxyferulic acid to sinapic acid. The resulting products may subsequently be converted to the corresponding alcohols that are incorporated into lignins. In Ocimum basilicum (Sweet basil), this protein is Caffeic acid 3-O-methyltransferase 1 (COMT1).